The following is a 268-amino-acid chain: Undecaprenyl-diphosphatase (268 aa).

8 helical membrane passes run 1–21, 39–59, 85–105, 110–130, 144–164, 187–207, 221–241, and 247–267; these read MSLI…FLPI, QGPL…LVYF, ALLV…LVAF, ALRS…PLWL, MSFK…IPGA, FSML…LIEL, DGLI…AVLM, and IGFL…LVFF.

This sequence belongs to the UppP family.

The protein localises to the cell inner membrane. It catalyses the reaction di-trans,octa-cis-undecaprenyl diphosphate + H2O = di-trans,octa-cis-undecaprenyl phosphate + phosphate + H(+). Catalyzes the dephosphorylation of undecaprenyl diphosphate (UPP). Confers resistance to bacitracin. The chain is Undecaprenyl-diphosphatase from Maricaulis maris (strain MCS10) (Caulobacter maris).